The primary structure comprises 370 residues: Histidinol-phosphate aminotransferase (370 aa).

Lysine 223 is subject to N6-(pyridoxal phosphate)lysine.

The protein belongs to the class-II pyridoxal-phosphate-dependent aminotransferase family. Histidinol-phosphate aminotransferase subfamily. As to quaternary structure, homodimer. Pyridoxal 5'-phosphate is required as a cofactor.

It carries out the reaction L-histidinol phosphate + 2-oxoglutarate = 3-(imidazol-4-yl)-2-oxopropyl phosphate + L-glutamate. Its pathway is amino-acid biosynthesis; L-histidine biosynthesis; L-histidine from 5-phospho-alpha-D-ribose 1-diphosphate: step 7/9. The sequence is that of Histidinol-phosphate aminotransferase from Methylobacterium sp. (strain 4-46).